A 45-amino-acid chain; its full sequence is Large ribosomal subunit protein bL34 (45 aa).

The tract at residues 1 to 45 (MTKRTLGGTVRKQKRTSGFRARMRSHTGQNVIRARRKKGRHRLTV) is disordered. Basic residues-rich tracts occupy residues 11 to 25 (RKQKRTSGFRARMRS) and 33 to 45 (RARRKKGRHRLTV).

The protein belongs to the bacterial ribosomal protein bL34 family.

The sequence is that of Large ribosomal subunit protein bL34 from Picosynechococcus sp. (strain ATCC 27264 / PCC 7002 / PR-6) (Agmenellum quadruplicatum).